The primary structure comprises 862 residues: Probable linoleate 9S-lipoxygenase 5 (862 aa).

The PLAT domain maps to 36–161 (NDVNASLLDG…KYKSERIFFA (126 aa)). Residues 164–862 (AYLPGETPEP…GKGIPNSVSI (699 aa)) enclose the Lipoxygenase domain. Positions 523, 528, 714, 718, and 862 each coordinate Fe cation.

This sequence belongs to the lipoxygenase family. As to quaternary structure, monomer. It depends on Fe cation as a cofactor. In terms of tissue distribution, not detected in leaves, stems, flowers, roots, tubers and stolons during normal growth and development.

The protein resides in the cytoplasm. The enzyme catalyses (9Z,12Z)-octadecadienoate + O2 = (9S)-hydroperoxy-(10E,12Z)-octadecadienoate. It functions in the pathway lipid metabolism; oxylipin biosynthesis. Plant lipoxygenases may be involved in a number of diverse aspects of plant physiology including growth and development, pest resistance, and senescence or responses to wounding. May contribute to cell death during the hypersensitive response (HR) by the massive production of free fatty acid hydroperoxides. Catalyzes the hydroperoxidation of lipids containing a cis,cis-1,4-pentadiene structure. In Solanum tuberosum (Potato), this protein is Probable linoleate 9S-lipoxygenase 5 (LOX1.5).